The following is a 351-amino-acid chain: Putative aminodehydroquinate synthase (351 aa).

NAD(+)-binding positions include 65–68, 97–101, 121–122, K134, K143, and 161–164; these read EPTK, GTTTD, TS, and YLTT. 3 residues coordinate Zn(2+): E176, H225, and H241.

This sequence belongs to the sugar phosphate cyclases superfamily. aDHQS family. Requires NAD(+) as cofactor. Co(2+) serves as cofactor. It depends on Zn(2+) as a cofactor.

In terms of biological role, may catalyze the conversion of 3,4-dideoxy-4-amino-D-arabino-heptulosonate 7-phosphate (aDAHP) to 5-deoxy-5-amino-3-dehydroquinate (aDHQ). Probably involved in the formation of 3-amino-5-hydroxybenzoic acid (AHBA), the precursor of rifamycin and related ansamycins. This is Putative aminodehydroquinate synthase from Amycolatopsis mediterranei (strain S699) (Nocardia mediterranei).